Here is a 208-residue protein sequence, read N- to C-terminus: MNYPNGKPYRKNSAIDGGKKTAAFSNIEYGGRGMSLEKDIEHSNAFYLKSDIAVIHKKPTPVQIVNVNYPKRSKAVINEAYFRTPSTTDYNGVYQGYYIDFEAKETKNKTSFPLNNIHDHQVEHMKNAYQQKGIVFLMIRFKTLDEVYLLPYSKFEIFWKRYKDNIKKSITVDEIRKNGYHIPYQYQPRLDYLKAVDKLILDESEDRV.

The Mg(2+) site is built by Thr-87, Asp-89, Glu-102, and Gln-121.

It belongs to the RecU family. Mg(2+) serves as cofactor.

It localises to the cytoplasm. It carries out the reaction Endonucleolytic cleavage at a junction such as a reciprocal single-stranded crossover between two homologous DNA duplexes (Holliday junction).. Endonuclease that resolves Holliday junction intermediates in genetic recombination. Cleaves mobile four-strand junctions by introducing symmetrical nicks in paired strands. Promotes annealing of linear ssDNA with homologous dsDNA. Required for DNA repair, homologous recombination and chromosome segregation. This chain is Holliday junction resolvase RecU, found in Staphylococcus aureus (strain MRSA252).